A 336-amino-acid chain; its full sequence is Inositol 2-dehydrogenase (336 aa).

The protein belongs to the Gfo/Idh/MocA family. As to quaternary structure, homotetramer.

It catalyses the reaction myo-inositol + NAD(+) = scyllo-inosose + NADH + H(+). Involved in the oxidation of myo-inositol (MI) to 2-keto-myo-inositol (2KMI or 2-inosose). The polypeptide is Inositol 2-dehydrogenase (Salmonella agona (strain SL483)).